We begin with the raw amino-acid sequence, 133 residues long: Large ribosomal subunit protein uL22 (133 aa).

Belongs to the universal ribosomal protein uL22 family. In terms of assembly, part of the 50S ribosomal subunit.

In terms of biological role, this protein binds specifically to 23S rRNA; its binding is stimulated by other ribosomal proteins, e.g. L4, L17, and L20. It is important during the early stages of 50S assembly. It makes multiple contacts with different domains of the 23S rRNA in the assembled 50S subunit and ribosome. Its function is as follows. The globular domain of the protein is located near the polypeptide exit tunnel on the outside of the subunit, while an extended beta-hairpin is found that lines the wall of the exit tunnel in the center of the 70S ribosome. This is Large ribosomal subunit protein uL22 from Nocardia farcinica (strain IFM 10152).